A 584-amino-acid chain; its full sequence is Alkaline nuclease (584 aa).

A disordered region spans residues 409-430 (GGGADHHLRGSPGDSPPPIPFE).

It belongs to the herpesviridae alkaline nuclease family. In terms of assembly, interacts with major DNA-binding protein; this interaction increases the nuclease processivity of the alkaline exonuclease.

The protein localises to the host nucleus. Its subcellular location is the host cytoplasm. In terms of biological role, plays a role in processing non linear or branched viral DNA intermediates in order to promote the production of mature packaged unit-length linear progeny viral DNA molecules. Exhibits endonuclease and exonuclease activities and accepts both double-stranded and single-stranded DNA as substrate. Exonuclease digestion of DNA is in the 5'-&gt; 3' direction and the products are 5'-monophosphate nucleosides. Additionally, forms a recombinase with the major DNA-binding protein, which displays strand exchange activity. This chain is Alkaline nuclease (UL98), found in Human cytomegalovirus (strain AD169) (HHV-5).